We begin with the raw amino-acid sequence, 134 residues long: Profilin-4 (134 aa).

It belongs to the profilin family. Occurs in many kinds of cells as a complex with monomeric actin in a 1:1 ratio. Specifically expressed in mature and germinating pollen grains, and growing pollen tubes (at protein level).

Its subcellular location is the cytoplasm. It localises to the cytoskeleton. Functionally, binds to actin monomers and regulates the organization of the actin cytoskeleton. At high concentrations, profilin prevents the polymerization of actin, whereas it enhances it at low concentrations. At low concentrations, associates with the poly-proline motif of formins to enhance actin filament elongation rate. Acts redundantly with PRF5 to regulate apical actin polymerization at the tip of pollen tube and control polarized pollen tube growth. Functions probably by favoring formin-mediated actin polymerization at pollen tube tips. In Arabidopsis thaliana (Mouse-ear cress), this protein is Profilin-4.